The sequence spans 854 residues: Golgin subfamily A member 6-like protein 22 (854 aa).

6 disordered regions span residues 1-114, 320-348, 366-447, 481-568, 581-681, and 714-854; these read MLMW…HQEA, QEEK…MRRQ, MHEQ…MWRQ, QEEK…MWRQ, RQEE…EQEE, and QEEK…MQEH. Over residues 15-35 the composition is skewed to basic residues; it reads LPTHPHLPTHPHLPTHPHLPT. Residues 45-66 are compositionally biased toward basic and acidic residues; the sequence is MSKETRQSKLAEAKEQLTDHHP. Composition is skewed to polar residues over residues 67–77 and 85–97; these read QTNPSVGTAAS and NNGT…TSGG. The span at 100–114 shows a compositional bias: basic and acidic residues; that stretch reads SPEDEQKASHQHQEA. Residues 103 to 854 adopt a coiled-coil conformation; sequence DEQKASHQHQ…RQQEEKMQEH (752 aa).

The protein belongs to the GOLGA6 family.

The protein is Golgin subfamily A member 6-like protein 22 of Homo sapiens (Human).